Reading from the N-terminus, the 484-residue chain is MGSNDLINEAYDDSEVVGEERESKSAWMKRWYQLLTSPLDLQLVINEKLEMINWDAYAKSLAKPLGNFLTILFFIIRLLQDNLIKPNYYKLNVKSGAFDLSKSNKLKEFDYLWEISSSFQNSNQFYAFQSWYFVTLRFLNNLFRFTIFILLSLNLYVSCKFMFGYFKTYNLFHLKKEFNSPNLTKHNLKDLSKEYYEDIYKQSLWSMLKHFFRGSRDDGPHVNQNEVEIFFQLRKWIPTNFMINLFVSFSPTAIVFLSFSDVSFTSAIAIVFHQYILDYIITKRFQRSVDDDLILSSAALQEYEDKHIMARINQCSNIDTLSSAMGTRSKTPRIFTTHSLCGEEIREVYNYEKREFEALPKMTESVPGSRETRIKDYGGISQVSDNQSHPIGFHYSPRMSPYYRDKVLDNNLAQSSSNENLEKGGAFLPNQDQNRPSKSLSPLRKTPLSARQKRFEGSEFNVLNKNDINSILRSPKKKKNYHKR.

Residue serine 3 is modified to Phosphoserine. A run of 2 helical transmembrane segments spans residues 145 to 165 (FTIFILLSLNLYVSCKFMFGY) and 252 to 272 (TAIVFLSFSDVSFTSAIAIVF). The segment at 416–458 (SSNENLEKGGAFLPNQDQNRPSKSLSPLRKTPLSARQKRFEGS) is disordered. Serine 417 bears the Phosphoserine mark. Residues 430–440 (NQDQNRPSKSL) are compositionally biased toward polar residues. Position 474 is a phosphoserine (serine 474).

It belongs to the NUR1 family. In terms of assembly, interacts with CSM1.

It localises to the nucleus membrane. In terms of biological role, member of a perinuclear network that controls recombination at multiple loci to maintain genome stability. Required for rDNA repeat stability. In Saccharomyces cerevisiae (strain YJM789) (Baker's yeast), this protein is Nuclear rim protein 1 (NUR1).